The primary structure comprises 455 residues: Nuclear mRNA export protein THP1 (455 aa).

A PCI domain is found at 220–431 (IEYRYLLGRY…QLCVVKKTTM (212 aa)).

In terms of assembly, heterodimer with THP1. The SAC3-THP1 complex interacts with CDC31 and SUS1, and with the mRNA export factor MEX67-MTR2, the TREX complex component SUB2, and the nucleoporin NUP1.

The protein localises to the nucleus envelope. Functionally, component of the SAC3-THP1 complex, which functions in transcription-coupled mRNA export from the nucleus to the cytoplasm. SAC3-THP1 functions in docking export-competent ribonucleoprotein particles (mRNPs) to the nuclear entrance of the nuclear pore complex (nuclear basket), by association with components of the nuclear mRNA export machinery (MEX67-MTR2 and SUB2) in the nucleoplasm and the nucleoporin NUP1 at the nuclear basket. THP1 binds to RNA in vitro. This chain is Nuclear mRNA export protein THP1 (THP1), found in Saccharomyces cerevisiae (strain ATCC 204508 / S288c) (Baker's yeast).